A 580-amino-acid chain; its full sequence is Arginine--tRNA ligase (580 aa).

The 'HIGH' region motif lies at A131–H141.

Belongs to the class-I aminoacyl-tRNA synthetase family. Monomer.

Its subcellular location is the cytoplasm. The catalysed reaction is tRNA(Arg) + L-arginine + ATP = L-arginyl-tRNA(Arg) + AMP + diphosphate. This is Arginine--tRNA ligase from Cereibacter sphaeroides (strain KD131 / KCTC 12085) (Rhodobacter sphaeroides).